Reading from the N-terminus, the 268-residue chain is Nickel import ATP-binding protein NikE (268 aa).

One can recognise an ABC transporter domain in the interval leucine 4–asparagine 252. Glycine 45–serine 52 provides a ligand contact to ATP.

It belongs to the ABC transporter superfamily. Nickel importer (TC 3.A.1.5.3) family. As to quaternary structure, the complex is composed of two ATP-binding proteins (NikD and NikE), two transmembrane proteins (NikB and NikC) and a solute-binding protein (NikA).

It localises to the cell inner membrane. The enzyme catalyses Ni(2+)(out) + ATP + H2O = Ni(2+)(in) + ADP + phosphate + H(+). Part of the ABC transporter complex NikABCDE involved in nickel import. Responsible for energy coupling to the transport system. The sequence is that of Nickel import ATP-binding protein NikE from Shigella flexneri serotype 5b (strain 8401).